A 228-amino-acid chain; its full sequence is Phosphoribosylformylglycinamidine synthase subunit PurQ (228 aa).

The Glutamine amidotransferase type-1 domain maps to F3–V226. The active-site Nucleophile is the C86. Active-site residues include H195 and E197.

In terms of assembly, part of the FGAM synthase complex composed of 1 PurL, 1 PurQ and 2 PurS subunits.

The protein resides in the cytoplasm. The enzyme catalyses N(2)-formyl-N(1)-(5-phospho-beta-D-ribosyl)glycinamide + L-glutamine + ATP + H2O = 2-formamido-N(1)-(5-O-phospho-beta-D-ribosyl)acetamidine + L-glutamate + ADP + phosphate + H(+). It carries out the reaction L-glutamine + H2O = L-glutamate + NH4(+). It participates in purine metabolism; IMP biosynthesis via de novo pathway; 5-amino-1-(5-phospho-D-ribosyl)imidazole from N(2)-formyl-N(1)-(5-phospho-D-ribosyl)glycinamide: step 1/2. In terms of biological role, part of the phosphoribosylformylglycinamidine synthase complex involved in the purines biosynthetic pathway. Catalyzes the ATP-dependent conversion of formylglycinamide ribonucleotide (FGAR) and glutamine to yield formylglycinamidine ribonucleotide (FGAM) and glutamate. The FGAM synthase complex is composed of three subunits. PurQ produces an ammonia molecule by converting glutamine to glutamate. PurL transfers the ammonia molecule to FGAR to form FGAM in an ATP-dependent manner. PurS interacts with PurQ and PurL and is thought to assist in the transfer of the ammonia molecule from PurQ to PurL. The polypeptide is Phosphoribosylformylglycinamidine synthase subunit PurQ (Geobacillus thermodenitrificans (strain NG80-2)).